Here is a 634-residue protein sequence, read N- to C-terminus: Sodium-dependent neutral amino acid transporter B(0)AT1 (634 aa).

The Cytoplasmic portion of the chain corresponds to 1–41; sequence MVRLVLPNPGLDTRILSLAELETIEQEEASSRPKWDNKAQY. At serine 17 the chain carries Phosphoserine. A helical membrane pass occupies residues 42-62; the sequence is LLTCVGFCVGLGNVWRFPYLC. Topologically, residues 63-65 are extracellular; it reads QSH. A helical transmembrane segment spans residues 66–86; that stretch reads GGGAFMIPFLILLVLEGIPLL. The Cytoplasmic segment spans residues 87-120; it reads HLEFAIGQRLRRGSLGVWSSIHPALKGVGLTSML. The helical transmembrane segment at 121–141 threads the bilayer; that stretch reads VSFVVGLYYNTIISWIMWYLF. At 142 to 192 the chain is on the extracellular side; the sequence is NSFQEPLPWSECPLNENQTGYVDECARSSPVDYFWYRETLNISTSISDSGS. 2 N-linked (GlcNAc...) asparagine glycosylation sites follow: asparagine 158 and asparagine 182. A helical transmembrane segment spans residues 193 to 213; it reads IQWRMLLCLACAWSVLYMCTI. Over 214–221 the chain is Cytoplasmic; it reads RGIETTGK. The chain crosses the membrane as a helical span at residues 222–242; it reads VVYITSTLPYVVLTIFLIRGL. Residues 243–268 lie on the Extracellular side of the membrane; that stretch reads TLKGATKGIIYLFTPNVTELANPVTW. An N-linked (GlcNAc...) asparagine glycan is attached at asparagine 258. A helical membrane pass occupies residues 269–289; it reads LDAGAQVFFSFSLAFGGLISF. Over 290–304 the chain is Cytoplasmic; that stretch reads SSYNSVHNNCERDSV. The chain crosses the membrane as a helical span at residues 305-325; the sequence is IVSIINGFTSVYVAIVIYSII. The Extracellular portion of the chain corresponds to 326 to 413; that stretch reads GFRATQRYDD…TEAITKMPVS (88 aa). N-linked (GlcNAc...) asparagine glycosylation is found at asparagine 354 and asparagine 368. The chain crosses the membrane as a helical span at residues 414–434; it reads PLWSVLFFIMLFCLGLSSMFG. Residues 435-456 lie on the Cytoplasmic side of the membrane; the sequence is NMEGVVVPLQDLKVIPPKWPKE. A helical transmembrane segment spans residues 457–477; it reads LLTGLICLGTFLIGFIFTLNS. Over 478 to 487 the chain is Extracellular; sequence GQYWLSLLDS. A helical membrane pass occupies residues 488–508; it reads YAVSIPLLIIAFCEMFSVVYV. Over 509 to 531 the chain is Cytoplasmic; the sequence is YGVDRFNKDIEFMIGHKPNIFWQ. Residues 532 to 552 form a helical membrane-spanning segment; the sequence is VTWRVVSPLLMLIILVFFFVV. At 553-581 the chain is on the extracellular side; that stretch reads QVSQELTYSIWNPGYEEFPKSQKISHPNW. The helical transmembrane segment at 582-602 threads the bilayer; that stretch reads VYAVVVIVAGVPSLTIPSYAI. Residues 603–634 are Cytoplasmic-facing; that stretch reads YKLIRNCCQKPGDRQGLVSTLSTASMNGDLKY. Serine 627 is subject to Phosphoserine.

Belongs to the sodium:neurotransmitter symporter (SNF) (TC 2.A.22) family. SLC6A19 subfamily. As to quaternary structure, interacts in a tissue-specific manner with ACE2 in small intestine and with CLTRN in the kidney. Interacts with CLTRN; this interaction is required for trafficking of SLC6A19 to the plasma membrane and for its catalytic activation in kidneys. Interacts with ACE2; this interaction is required for trafficking of SLC6A19 to the plasma membrane and for its catalytic activation in intestine. Interacts with ANPEP; the interaction positively regulates its amino acid transporter activity.

The protein localises to the membrane. The catalysed reaction is L-alanine(in) + Na(+)(in) = L-alanine(out) + Na(+)(out). It carries out the reaction L-cysteine(in) + Na(+)(in) = L-cysteine(out) + Na(+)(out). The enzyme catalyses L-glutamine(in) + Na(+)(in) = L-glutamine(out) + Na(+)(out). It catalyses the reaction glycine(in) + Na(+)(in) = glycine(out) + Na(+)(out). The catalysed reaction is L-isoleucine(in) + Na(+)(in) = L-isoleucine(out) + Na(+)(out). It carries out the reaction L-leucine(in) + Na(+)(in) = L-leucine(out) + Na(+)(out). The enzyme catalyses L-methionine(in) + Na(+)(in) = L-methionine(out) + Na(+)(out). It catalyses the reaction L-phenylalanine(in) + Na(+)(in) = L-phenylalanine(out) + Na(+)(out). The catalysed reaction is L-serine(in) + Na(+)(in) = L-serine(out) + Na(+)(out). It carries out the reaction L-tryptophan(in) + Na(+)(in) = L-tryptophan(out) + Na(+)(out). The enzyme catalyses L-tyrosine(in) + Na(+)(in) = L-tyrosine(out) + Na(+)(out). It catalyses the reaction L-valine(in) + Na(+)(in) = L-valine(out) + Na(+)(out). Its function is as follows. Transporter that mediates resorption of neutral amino acids across the apical membrane of renal and intestinal epithelial cells. This uptake is sodium-dependent and chloride-independent. Requires CLTRN in kidney or ACE2 in intestine for cell surface expression and amino acid transporter activity. In Pongo abelii (Sumatran orangutan), this protein is Sodium-dependent neutral amino acid transporter B(0)AT1 (SLC6A19).